The primary structure comprises 543 residues: uncharacterized protein (543 aa).

One can recognise a Radical SAM core domain in the interval 203-460 (NYPYIIAEIE…FLWFKEKVRE (258 aa)). The TRAM domain maps to 470 to 534 (VVPKGTILRD…RRSITGKVVR (65 aa)).

This is an uncharacterized protein from Methanocaldococcus jannaschii (strain ATCC 43067 / DSM 2661 / JAL-1 / JCM 10045 / NBRC 100440) (Methanococcus jannaschii).